A 266-amino-acid chain; its full sequence is GTP cyclohydrolase FolE2 (266 aa).

Belongs to the GTP cyclohydrolase IV family.

It catalyses the reaction GTP + H2O = 7,8-dihydroneopterin 3'-triphosphate + formate + H(+). The protein operates within cofactor biosynthesis; 7,8-dihydroneopterin triphosphate biosynthesis; 7,8-dihydroneopterin triphosphate from GTP: step 1/1. In terms of biological role, converts GTP to 7,8-dihydroneopterin triphosphate. The sequence is that of GTP cyclohydrolase FolE2 from Syntrophotalea carbinolica (strain DSM 2380 / NBRC 103641 / GraBd1) (Pelobacter carbinolicus).